A 142-amino-acid polypeptide reads, in one-letter code: Type IV pilus subunit protein TapA (142 aa).

Residues 1–6 (MKKQSG) constitute a propeptide, leader sequence. Residue F7 is modified to N-methylphenylalanine. The chain crosses the membrane as a helical span at residues 7-27 (FTLIELMIVVAIVAILAAIAL).

This sequence belongs to the N-Me-Phe pilin family.

The protein localises to the membrane. In terms of biological role, major component of the type IV (TAP) pilus. Aeromonas hydrophila possesses two distinct families of type IV pili: the bundle-forming pilus (Bfp) and the type IV pilus (Tap). The chain is Type IV pilus subunit protein TapA (tapA) from Aeromonas hydrophila.